We begin with the raw amino-acid sequence, 555 residues long: Gamma-aminobutyric acid receptor subunit alpha-4 (555 aa).

The N-terminal stretch at 1 to 35 is a signal peptide; sequence MVSAKKVPAIAMSFGVSFALLHFLCLAACLNESPG. Residues 36–259 lie on the Extracellular side of the membrane; that stretch reads QNQKEEKLCP…FHLRRKMGYF (224 aa). N-linked (GlcNAc...) asparagine glycosylation is present at Asn47. 4-aminobutanoate is bound at residue Arg100. 2 N-linked (GlcNAc...) asparagine glycosylation sites follow: Asn144 and Asn157. A 4-aminobutanoate-binding site is contributed by Thr163. Residues Cys172 and Cys186 are joined by a disulfide bond. A helical membrane pass occupies residues 260-280; the sequence is MIQTYIPCIMTVILSQVSFWI. The Cytoplasmic portion of the chain corresponds to 281–284; the sequence is NKES. The helical transmembrane segment at 285–305 threads the bilayer; the sequence is VPARTVFGITTVLTMTTLSIS. Topologically, residues 306-318 are extracellular; that stretch reads ARHSLPKVSYATA. A helical transmembrane segment spans residues 319 to 341; it reads MDWFIAVCFAFVFSALIEFAAVN. Residues 342-518 lie on the Cytoplasmic side of the membrane; the sequence is YFTNVQMEKA…PPPSGSGTSK (177 aa). Disordered stretches follow at residues 354 to 435 and 495 to 516; these read KTSK…SPNP and GTSG…GSGT. The segment covering 410 to 421 has biased composition (low complexity); that stretch reads SSKSSTVVQGSS. Residues 422–435 show a composition bias toward polar residues; the sequence is EATPQSYLASSPNP. A helical membrane pass occupies residues 519–545; that stretch reads IDKYARILFPVTFGAFNMVYWVVYLSK. At 546–555 the chain is on the extracellular side; it reads DTMEKSESLM.

Belongs to the ligand-gated ion channel (TC 1.A.9) family. Gamma-aminobutyric acid receptor (TC 1.A.9.5) subfamily. GABRA4 sub-subfamily. As to quaternary structure, heteropentamer, formed by a combination of alpha (GABRA1-6), beta (GABRB1-3), gamma (GABRG1-3), delta (GABRD), epsilon (GABRE), rho (GABRR1-3), pi (GABRP) and theta (GABRQ) chains, each subunit exhibiting distinct physiological and pharmacological properties. As to expression, expressed in the brain.

The protein localises to the cell membrane. Its subcellular location is the postsynaptic cell membrane. The catalysed reaction is chloride(in) = chloride(out). Potentiated by histamine. Functionally, alpha subunit of the heteropentameric ligand-gated chloride channel gated by gamma-aminobutyric acid (GABA), a major inhibitory neurotransmitter in the brain. GABA-gated chloride channels, also named GABA(A) receptors (GABAAR), consist of five subunits arranged around a central pore and contain GABA active binding site(s) located at the alpha and beta subunit interface(s). When activated by GABA, GABAARs selectively allow the flow of chloride anions across the cell membrane down their electrochemical gradient. GABAARs containing alpha-4 are predominantly extrasynaptic, contributing to tonic inhibition in dentate granule cells and thalamic relay neurons. Extrasynaptic alpha-4-containing GABAARs control levels of excitability and network activity. GABAARs containing alpha-4 are often found with the delta or gamma-2 subunits, in combination with beta subunits. GABAAR containing alpha-4-beta-3-delta subunits can simultaneously bind GABA and histamine where histamine binds at the interface of two neighboring beta subunits, which may be involved in the regulation of sleep and wakefulness. The protein is Gamma-aminobutyric acid receptor subunit alpha-4 (GABRA4) of Bos taurus (Bovine).